A 393-amino-acid polypeptide reads, in one-letter code: MKRPLRRPFAVLLFVVLCAAASFPSVLRRSVGPAPVLAPLPPLDPARLNATLLRLAAADPSEAPLRRDVDDLLEGRLPASSARARAWRLRGDRLHLHLRHHQFPVYRRGHHPDHDHDPLLHPLPRQELHLDPSLRRALRSWHRLRRHDPGVLRNLPSLLSLPGRIPSCAVVGNSGILLGASHGALIDSHAAVFRLNNARISGFAANVGAKTNLSFINSNVLHLCARRPNCFCHPYGDGVPILLYICQAAHFLDVASCNASSRSLHAASISVTDPRLDVLCARIVKYYSLRRFVAETGRAAEEWSSTRDAAMFHYSSGMQAIMVAVGVCDRVSVFGFGKAADAKHHYHSNQKAELDLHDYKAEYAFYRDLADRPEVVPFLNDAGIAVPPVVFYH.

Topologically, residues 1 to 8 are cytoplasmic; that stretch reads MKRPLRRP. The helical; Signal-anchor for type II membrane protein transmembrane segment at 9–27 threads the bilayer; it reads FAVLLFVVLCAAASFPSVL. At 28 to 393 the chain is on the lumenal side; it reads RRSVGPAPVL…IAVPPVVFYH (366 aa). N-linked (GlcNAc...) asparagine glycans are attached at residues Asn49, Asn212, and Asn258.

The protein belongs to the glycosyltransferase 29 family. In terms of tissue distribution, expressed in leaves and stalks. Expressed at low levels in roots.

It is found in the golgi apparatus membrane. Its function is as follows. Possesses sialyltransferase-like activity in vitro. Transfers sialic acid to the oligosaccharide Gal-beta-1,3-GalNAc and to glycoproteins such as asialofetuin, alpha-1-acid glycoprotein (NeuAc-alpha-2,3-Gal-beta-1,3-GalNAc-) and andasialo-alpha-1-acid glycoprotein. The transferred sialic acid is linked to galactose of Gal-beta-1,3-GalNAc through alpha-2,6-linkage. The polypeptide is Sialyltransferase-like protein 1 (Oryza sativa subsp. japonica (Rice)).